The following is a 301-amino-acid chain: Ribonuclease Z (301 aa).

Residues histidine 63, histidine 65, aspartate 67, histidine 68, histidine 141, aspartate 204, and histidine 262 each contribute to the Zn(2+) site. Aspartate 67 acts as the Proton acceptor in catalysis.

This sequence belongs to the RNase Z family. In terms of assembly, homodimer. Zn(2+) serves as cofactor.

It carries out the reaction Endonucleolytic cleavage of RNA, removing extra 3' nucleotides from tRNA precursor, generating 3' termini of tRNAs. A 3'-hydroxy group is left at the tRNA terminus and a 5'-phosphoryl group is left at the trailer molecule.. Functionally, zinc phosphodiesterase, which displays some tRNA 3'-processing endonuclease activity. Probably involved in tRNA maturation, by removing a 3'-trailer from precursor tRNA. In Streptomyces avermitilis (strain ATCC 31267 / DSM 46492 / JCM 5070 / NBRC 14893 / NCIMB 12804 / NRRL 8165 / MA-4680), this protein is Ribonuclease Z.